A 20-amino-acid chain; its full sequence is DLVFYCPKCTAERQTACPKL.

One can recognise an IGFBP N-terminal domain in the interval 2 to 20 (LVFYCPKCTAERQTACPKL).

Binds IGF2 more than IGF1. In terms of processing, N-glycosylated.

The protein localises to the secreted. Inhibits IGF-mediated growth and developmental rates. IGF-binding proteins prolong the half-life of the IGFs and have been shown to either inhibit or stimulate the growth promoting effects of the IGFs on cell culture. They alter the interaction of IGFs with their cell surface receptors. This Oncorhynchus tshawytscha (Chinook salmon) protein is Insulin-like growth factor-binding protein 2 (igfbp2).